Consider the following 214-residue polypeptide: dITP/XTP pyrophosphatase (214 aa).

Residue S13–K18 coordinates substrate. Residues E45 and D74 each contribute to the Mg(2+) site. The active-site Proton acceptor is D74. Substrate is bound by residues S75, F163 to D166, K186, and H199 to R200.

This sequence belongs to the HAM1 NTPase family. Homodimer. Mg(2+) is required as a cofactor.

The catalysed reaction is XTP + H2O = XMP + diphosphate + H(+). It catalyses the reaction dITP + H2O = dIMP + diphosphate + H(+). It carries out the reaction ITP + H2O = IMP + diphosphate + H(+). Its function is as follows. Pyrophosphatase that catalyzes the hydrolysis of nucleoside triphosphates to their monophosphate derivatives, with a high preference for the non-canonical purine nucleotides XTP (xanthosine triphosphate), dITP (deoxyinosine triphosphate) and ITP. Seems to function as a house-cleaning enzyme that removes non-canonical purine nucleotides from the nucleotide pool, thus preventing their incorporation into DNA/RNA and avoiding chromosomal lesions. This is dITP/XTP pyrophosphatase from Agrobacterium fabrum (strain C58 / ATCC 33970) (Agrobacterium tumefaciens (strain C58)).